Here is a 131-residue protein sequence, read N- to C-terminus: D-ribose pyranase (131 aa).

Residue His20 is the Proton donor of the active site. Residues Asp28, His98, and 120 to 122 each bind substrate; that span reads YAN.

This sequence belongs to the RbsD / FucU family. RbsD subfamily. Homodecamer.

It is found in the cytoplasm. The catalysed reaction is beta-D-ribopyranose = beta-D-ribofuranose. It participates in carbohydrate metabolism; D-ribose degradation; D-ribose 5-phosphate from beta-D-ribopyranose: step 1/2. In terms of biological role, catalyzes the interconversion of beta-pyran and beta-furan forms of D-ribose. The sequence is that of D-ribose pyranase from Bacillus cereus (strain ZK / E33L).